A 664-amino-acid polypeptide reads, in one-letter code: NAD(P)H-quinone oxidoreductase chain 5 (664 aa).

Transmembrane regions (helical) follow at residues 7 to 27 (YAWL…IGLI), 39 to 59 (LNAV…FGLL), 91 to 111 (HLSA…MIYT), 120 to 140 (GYVR…GLVF), 144 to 164 (LVQV…LIGF), 187 to 207 (FGLL…EFDL), 219 to 239 (GQIS…GPVA), 258 to 278 (TPIS…FLVA), 290 to 310 (AMNV…TIAL), 327 to 347 (LGYM…FHLM), 352 to 372 (FKAM…EVVG), 395 to 415 (ATTF…AGFW), 420 to 440 (ILGL…ATAG), 495 to 515 (FPLM…VPWG), 541 to 561 (FLIM…IASL), and 643 to 663 (VQFY…FFSV).

Belongs to the complex I subunit 5 family.

The protein resides in the cell membrane. The enzyme catalyses a plastoquinone + NADH + (n+1) H(+)(in) = a plastoquinol + NAD(+) + n H(+)(out). The catalysed reaction is a plastoquinone + NADPH + (n+1) H(+)(in) = a plastoquinol + NADP(+) + n H(+)(out). Functionally, NDH-1 shuttles electrons from NAD(P)H, via FMN and iron-sulfur (Fe-S) centers, to quinones in the respiratory chain. The immediate electron acceptor for the enzyme in this species is believed to be plastoquinone. Couples the redox reaction to proton translocation (for every two electrons transferred, four hydrogen ions are translocated across the cytoplasmic membrane), and thus conserves the redox energy in a proton gradient. The chain is NAD(P)H-quinone oxidoreductase chain 5 (ndhF) from Picosynechococcus sp. (strain ATCC 27264 / PCC 7002 / PR-6) (Agmenellum quadruplicatum).